A 31-amino-acid polypeptide reads, in one-letter code: Cytochrome b6-f complex subunit 6 (31 aa).

The chain crosses the membrane as a helical span at residues Ile-4–Gly-24.

It belongs to the PetL family. As to quaternary structure, the 4 large subunits of the cytochrome b6-f complex are cytochrome b6, subunit IV (17 kDa polypeptide, PetD), cytochrome f and the Rieske protein, while the 4 small subunits are PetG, PetL, PetM and PetN. The complex functions as a dimer.

The protein resides in the plastid. It is found in the chloroplast thylakoid membrane. Functionally, component of the cytochrome b6-f complex, which mediates electron transfer between photosystem II (PSII) and photosystem I (PSI), cyclic electron flow around PSI, and state transitions. PetL is important for photoautotrophic growth as well as for electron transfer efficiency and stability of the cytochrome b6-f complex. This Coffea arabica (Arabian coffee) protein is Cytochrome b6-f complex subunit 6.